A 337-amino-acid chain; its full sequence is Putative NAC domain-containing protein 94 (337 aa).

The NAC domain occupies 20 to 191; the sequence is VLPGFRFHPT…AWAICRIFKK (172 aa).

The protein resides in the nucleus. This chain is Putative NAC domain-containing protein 94 (ANAC094), found in Arabidopsis thaliana (Mouse-ear cress).